Consider the following 115-residue polypeptide: Large ribosomal subunit protein bL20 (115 aa).

Belongs to the bacterial ribosomal protein bL20 family.

Functionally, binds directly to 23S ribosomal RNA and is necessary for the in vitro assembly process of the 50S ribosomal subunit. It is not involved in the protein synthesizing functions of that subunit. The protein is Large ribosomal subunit protein bL20 of Chlorobium luteolum (strain DSM 273 / BCRC 81028 / 2530) (Pelodictyon luteolum).